We begin with the raw amino-acid sequence, 501 residues long: Lysine--tRNA ligase (501 aa).

The Mg(2+) site is built by Glu-411 and Glu-418.

The protein belongs to the class-II aminoacyl-tRNA synthetase family. As to quaternary structure, homodimer. The cofactor is Mg(2+).

The protein resides in the cytoplasm. It catalyses the reaction tRNA(Lys) + L-lysine + ATP = L-lysyl-tRNA(Lys) + AMP + diphosphate. The protein is Lysine--tRNA ligase of Aliivibrio salmonicida (strain LFI1238) (Vibrio salmonicida (strain LFI1238)).